We begin with the raw amino-acid sequence, 400 residues long: Phosphoglycerate kinase (400 aa).

Substrate contacts are provided by residues 24–26 (DFN), Arg-40, 63–66 (HFGR), Arg-121, and Arg-154. ATP-binding positions include Lys-205, Gly-296, Glu-327, and 356–359 (GGDS).

This sequence belongs to the phosphoglycerate kinase family. In terms of assembly, monomer.

Its subcellular location is the cytoplasm. The catalysed reaction is (2R)-3-phosphoglycerate + ATP = (2R)-3-phospho-glyceroyl phosphate + ADP. Its pathway is carbohydrate degradation; glycolysis; pyruvate from D-glyceraldehyde 3-phosphate: step 2/5. The sequence is that of Phosphoglycerate kinase from Nostoc punctiforme (strain ATCC 29133 / PCC 73102).